A 258-amino-acid polypeptide reads, in one-letter code: Global transcriptional regulator CodY (258 aa).

A GAF domain region spans residues 1–156 (MSSLLSKTRR…SATIVGMEML (156 aa)). Positions 204-223 (ASKIADKVGITRSVIVNALR) form a DNA-binding region, H-T-H motif.

It belongs to the CodY family.

Its subcellular location is the cytoplasm. In terms of biological role, DNA-binding global transcriptional regulator which is involved in the adaptive response to starvation and acts by directly or indirectly controlling the expression of numerous genes in response to nutrient availability. During rapid exponential growth, CodY is highly active and represses genes whose products allow adaptation to nutrient depletion. This Clostridium botulinum (strain Eklund 17B / Type B) protein is Global transcriptional regulator CodY.